The following is a 306-amino-acid chain: F-box/LRR-repeat protein At3g26922 (306 aa).

One can recognise an F-box domain in the interval 13–73 (EDRISDLPEA…QSEDETYSEI (61 aa)). LRR repeat units follow at residues 67–93 (DETY…HLGF), 98–122 (CRSV…VLHV), 138–170 (CETL…RLEN), 171–196 (VDYK…VVYR), 215–243 (LTIY…KIDG), and 263–288 (IMNV…SLAL).

In Arabidopsis thaliana (Mouse-ear cress), this protein is F-box/LRR-repeat protein At3g26922.